We begin with the raw amino-acid sequence, 117 residues long: Immunoglobulin kappa variable 9-129 (117 aa).

An N-terminal signal peptide occupies residues 1–22 (MDMRAPAQVFGFLLLWFPGARC). The tract at residues 23 to 45 (DIQMTQSPSSLSASLGERVSLTC) is framework-1. An intrachain disulfide couples C45 to C110. A complementarity-determining-1 region spans residues 46 to 56 (RASQDIHGYLN). The segment at 57–71 (LFQQKPGETIKHLIY) is framework-2. The tract at residues 72–78 (ETSNLDS) is complementarity-determining-2. The interval 79-110 (GVPKRFSGSRSGSDYSLIIGSLESEDFADYYC) is framework-3. Positions 111–117 (LQYASSP) are complementarity-determining-3.

In Mus musculus (Mouse), this protein is Immunoglobulin kappa variable 9-129.